The chain runs to 102 residues: NADH-quinone oxidoreductase subunit K (102 aa).

3 helical membrane passes run 5–25 (IAHY…GIFL), 31–51 (IVIL…FVAF), and 66–86 (FVLT…VVFF).

This sequence belongs to the complex I subunit 4L family. In terms of assembly, NDH-1 is composed of 14 different subunits. Subunits NuoA, H, J, K, L, M, N constitute the membrane sector of the complex.

It localises to the cell inner membrane. The catalysed reaction is a quinone + NADH + 5 H(+)(in) = a quinol + NAD(+) + 4 H(+)(out). Functionally, NDH-1 shuttles electrons from NADH, via FMN and iron-sulfur (Fe-S) centers, to quinones in the respiratory chain. The immediate electron acceptor for the enzyme in this species is believed to be ubiquinone. Couples the redox reaction to proton translocation (for every two electrons transferred, four hydrogen ions are translocated across the cytoplasmic membrane), and thus conserves the redox energy in a proton gradient. The polypeptide is NADH-quinone oxidoreductase subunit K (Mesorhizobium japonicum (strain LMG 29417 / CECT 9101 / MAFF 303099) (Mesorhizobium loti (strain MAFF 303099))).